Here is a 217-residue protein sequence, read N- to C-terminus: Membrane-associated progesterone receptor component 2 (217 aa).

Ser15 carries an O-linked (Xyl...) (chondroitin sulfate) serine glycan. A helical membrane pass occupies residues 40-62 (ALLATGGEMLLNVALVALVLLGA). Phosphoserine occurs at positions 84, 98, and 202. The region spanning 96-195 (DFSLEQLRQY…EKYDYVGRLL (100 aa)) is the Cytochrome b5 heme-binding domain. The disordered stretch occupies residues 196–217 (KPGEEPSEYTDEEDTKDHSKQD). Positions 200–209 (EPSEYTDEED) are enriched in acidic residues. Position 204 is a phosphotyrosine (Tyr204). Position 205 is a phosphothreonine (Thr205).

This sequence belongs to the cytochrome b5 family. MAPR subfamily. Interacts with PGRMC1. Interacts with AAAS. Expressed in brown adipose tissue, white adipose tissue, liver, heart, skeletal muscle, brain and adrenal gland.

Its subcellular location is the membrane. It is found in the nucleus envelope. The protein resides in the endoplasmic reticulum. It localises to the secreted. Required for the maintenance of uterine histoarchitecture and normal female reproductive lifespan. May serve as a universal non-classical progesterone receptor in the uterus. Intracellular heme chaperone required for delivery of labile, or signaling heme, to the nucleus. Plays a role in adipocyte function and systemic glucose homeostasis. In brown fat, which has a high demand for heme, delivery of labile heme in the nucleus regulates the activity of heme-responsive transcriptional repressors such as NR1D1 and BACH1. The sequence is that of Membrane-associated progesterone receptor component 2 from Mus musculus (Mouse).